The chain runs to 321 residues: Lipoyl synthase (321 aa).

Positions 68, 73, 79, 94, 98, 101, and 308 each coordinate [4Fe-4S] cluster. One can recognise a Radical SAM core domain in the interval 80-297 (FNHGTATFMI…KAEALAMGFT (218 aa)).

This sequence belongs to the radical SAM superfamily. Lipoyl synthase family. The cofactor is [4Fe-4S] cluster.

It localises to the cytoplasm. The enzyme catalyses [[Fe-S] cluster scaffold protein carrying a second [4Fe-4S](2+) cluster] + N(6)-octanoyl-L-lysyl-[protein] + 2 oxidized [2Fe-2S]-[ferredoxin] + 2 S-adenosyl-L-methionine + 4 H(+) = [[Fe-S] cluster scaffold protein] + N(6)-[(R)-dihydrolipoyl]-L-lysyl-[protein] + 4 Fe(3+) + 2 hydrogen sulfide + 2 5'-deoxyadenosine + 2 L-methionine + 2 reduced [2Fe-2S]-[ferredoxin]. Its pathway is protein modification; protein lipoylation via endogenous pathway; protein N(6)-(lipoyl)lysine from octanoyl-[acyl-carrier-protein]: step 2/2. In terms of biological role, catalyzes the radical-mediated insertion of two sulfur atoms into the C-6 and C-8 positions of the octanoyl moiety bound to the lipoyl domains of lipoate-dependent enzymes, thereby converting the octanoylated domains into lipoylated derivatives. This chain is Lipoyl synthase, found in Escherichia fergusonii (strain ATCC 35469 / DSM 13698 / CCUG 18766 / IAM 14443 / JCM 21226 / LMG 7866 / NBRC 102419 / NCTC 12128 / CDC 0568-73).